A 301-amino-acid chain; its full sequence is Acetylglutamate kinase (301 aa).

Substrate is bound by residues 70 to 71 (GG), arginine 92, and asparagine 185.

This sequence belongs to the acetylglutamate kinase family. ArgB subfamily.

The protein localises to the cytoplasm. The catalysed reaction is N-acetyl-L-glutamate + ATP = N-acetyl-L-glutamyl 5-phosphate + ADP. The protein operates within amino-acid biosynthesis; L-arginine biosynthesis; N(2)-acetyl-L-ornithine from L-glutamate: step 2/4. In terms of biological role, catalyzes the ATP-dependent phosphorylation of N-acetyl-L-glutamate. In Synechococcus elongatus (strain ATCC 33912 / PCC 7942 / FACHB-805) (Anacystis nidulans R2), this protein is Acetylglutamate kinase.